The following is a 695-amino-acid chain: Elongation factor G 2 (695 aa).

Residues 5 to 280 form the tr-type G domain; it reads SKYRNIGIFA…AVVDYLPSPT (276 aa). GTP contacts are provided by residues 14–21, 78–82, and 132–135; these read AHVDAGKT, DTPGH, and NKLD.

It belongs to the TRAFAC class translation factor GTPase superfamily. Classic translation factor GTPase family. EF-G/EF-2 subfamily.

Its subcellular location is the cytoplasm. Its function is as follows. Catalyzes the GTP-dependent ribosomal translocation step during translation elongation. During this step, the ribosome changes from the pre-translocational (PRE) to the post-translocational (POST) state as the newly formed A-site-bound peptidyl-tRNA and P-site-bound deacylated tRNA move to the P and E sites, respectively. Catalyzes the coordinated movement of the two tRNA molecules, the mRNA and conformational changes in the ribosome. The protein is Elongation factor G 2 of Vibrio vulnificus (strain YJ016).